The sequence spans 853 residues: DNA mismatch repair protein MutS (853 aa).

Position 614-621 (614-621 (GPNMGGKS)) interacts with ATP.

The protein belongs to the DNA mismatch repair MutS family.

Functionally, this protein is involved in the repair of mismatches in DNA. It is possible that it carries out the mismatch recognition step. This protein has a weak ATPase activity. The sequence is that of DNA mismatch repair protein MutS from Klebsiella pneumoniae subsp. pneumoniae (strain ATCC 700721 / MGH 78578).